We begin with the raw amino-acid sequence, 54 residues long: Photoreceptor disk component PRCD (54 aa).

A lipid anchor (S-palmitoyl cysteine) is attached at Cys2. Positions 24–54 (QPEPSGADGAVVGSRSERDLQSSGRKEEPLK) are disordered. Over residues 38-54 (RSERDLQSSGRKEEPLK) the composition is skewed to basic and acidic residues.

It belongs to the PRCD family. In terms of assembly, interacts with RHO/rhodopsin; the interaction promotes PRCD stability. Palmitoylated at Cys-2. Palmitoylation is essential for protein stability and trafficking to the photoreceptor outer segment, but does not appear to be essential for membrane localization. Probably palmitoylated by ZDHHC3. In terms of processing, phosphorylated. As to expression, expressed in retina.

Its subcellular location is the cell projection. It localises to the cilium. The protein localises to the photoreceptor outer segment. It is found in the membrane. The protein resides in the endoplasmic reticulum. Its subcellular location is the golgi apparatus. Its function is as follows. Involved in vision. This Canis lupus familiaris (Dog) protein is Photoreceptor disk component PRCD.